The sequence spans 216 residues: 3,4-dihydroxy-2-butanone 4-phosphate synthase (216 aa).

D-ribulose 5-phosphate contacts are provided by residues 33–34 (RE), D38, 146–150 (RRGHT), and E170. Residue E34 participates in Mg(2+) binding. H149 serves as a coordination point for Mg(2+).

It belongs to the DHBP synthase family. As to quaternary structure, homodimer. Requires Mg(2+) as cofactor. Mn(2+) serves as cofactor.

The catalysed reaction is D-ribulose 5-phosphate = (2S)-2-hydroxy-3-oxobutyl phosphate + formate + H(+). It participates in cofactor biosynthesis; riboflavin biosynthesis; 2-hydroxy-3-oxobutyl phosphate from D-ribulose 5-phosphate: step 1/1. In terms of biological role, catalyzes the conversion of D-ribulose 5-phosphate to formate and 3,4-dihydroxy-2-butanone 4-phosphate. This Pseudomonas putida (strain ATCC 47054 / DSM 6125 / CFBP 8728 / NCIMB 11950 / KT2440) protein is 3,4-dihydroxy-2-butanone 4-phosphate synthase.